The sequence spans 249 residues: 6-phosphogluconolactonase 3 (249 aa).

It belongs to the glucosamine/galactosamine-6-phosphate isomerase family. 6-phosphogluconolactonase subfamily.

It localises to the cytoplasm. The protein resides in the nucleus. It carries out the reaction 6-phospho-D-glucono-1,5-lactone + H2O = 6-phospho-D-gluconate + H(+). The protein operates within carbohydrate degradation; pentose phosphate pathway; D-ribulose 5-phosphate from D-glucose 6-phosphate (oxidative stage): step 2/3. Functionally, hydrolysis of 6-phosphogluconolactone to 6-phosphogluconate. The chain is 6-phosphogluconolactonase 3 (SOL3) from Saccharomyces cerevisiae (strain RM11-1a) (Baker's yeast).